We begin with the raw amino-acid sequence, 67 residues long: Large ribosomal subunit protein bL35 (67 aa).

The protein belongs to the bacterial ribosomal protein bL35 family.

In Rhizobium johnstonii (strain DSM 114642 / LMG 32736 / 3841) (Rhizobium leguminosarum bv. viciae), this protein is Large ribosomal subunit protein bL35.